The sequence spans 167 residues: Protein archease (167 aa).

At Ala-2 the chain carries N-acetylalanine. Residues Asp-39, Asp-166, and Ile-167 each coordinate Ca(2+).

Belongs to the archease family. Component of the tRNA-splicing ligase complex.

Its function is as follows. Component of the tRNA-splicing ligase complex required to facilitate the enzymatic turnover of catalytic subunit RTCB. Together with DDX1, acts by facilitating the guanylylation of RTCB, a key intermediate step in tRNA ligation. The sequence is that of Protein archease (ZBTB8OS) from Bos taurus (Bovine).